Here is a 206-residue protein sequence, read N- to C-terminus: N-(5'-phosphoribosyl)anthranilate isomerase (206 aa).

It belongs to the TrpF family.

The enzyme catalyses N-(5-phospho-beta-D-ribosyl)anthranilate = 1-(2-carboxyphenylamino)-1-deoxy-D-ribulose 5-phosphate. It participates in amino-acid biosynthesis; L-tryptophan biosynthesis; L-tryptophan from chorismate: step 3/5. The chain is N-(5'-phosphoribosyl)anthranilate isomerase from Pseudomonas savastanoi pv. phaseolicola (strain 1448A / Race 6) (Pseudomonas syringae pv. phaseolicola (strain 1448A / Race 6)).